The sequence spans 205 residues: Recombination protein RecR (205 aa).

The segment at C64–C79 adopts a C4-type zinc-finger fold. The 96-residue stretch at T87 to P182 folds into the Toprim domain.

This sequence belongs to the RecR family.

Functionally, may play a role in DNA repair. It seems to be involved in an RecBC-independent recombinational process of DNA repair. It may act with RecF and RecO. The chain is Recombination protein RecR from Chloroflexus aggregans (strain MD-66 / DSM 9485).